The following is a 232-amino-acid chain: Phycobilisome rod-core linker polypeptide cpcG (232 aa).

A PBS-linker domain is found at 11 to 191; that stretch reads STQNQRVDGY…PRYGADFKEK (181 aa).

It belongs to the phycobilisome linker protein family. The phycobilisome is a hemidiscoidal structure that is composed of two distinct substructures: a core complex and a number of rods radiating from the core.

The protein resides in the plastid. It localises to the chloroplast. The protein localises to the chloroplast thylakoid membrane. Functionally, rod-core linker protein required for attachment of phycocyanin to allophycocyanin in cores of phycobilisomes. Its function is as follows. Linker polypeptides determine the state of aggregation and the location of the disk-shaped phycobiliprotein units within the phycobilisome and modulate their spectroscopic properties in order to mediate a directed and optimal energy transfer. This Pyropia yezoensis (Susabi-nori) protein is Phycobilisome rod-core linker polypeptide cpcG (cpcG).